We begin with the raw amino-acid sequence, 363 residues long: rRNA processing protein rcl1 (363 aa).

This sequence belongs to the RNA 3'-terminal cyclase family. Type 2 subfamily. Interacts directly with bms1 and the U3 snoRNA to form a stable subcomplex. Component of the 90S small subunit processome also known as 90S pre-ribosome that consists of the 35S pre-rRNA, early-associating ribosomal proteins most of which are part of the small ribosomal subunit, the U3 snoRNA and associated proteins.

Its subcellular location is the nucleus. It localises to the nucleolus. In terms of biological role, does not have cyclase activity. Plays a role in 40S-ribosomal-subunit biogenesis in the early pre-rRNA processing steps at sites A0, A1 and A2 that are required for proper maturation of the 18S RNA. Rcl1 activates bms1 by promoting GDP/GTP exchange. This Schizosaccharomyces pombe (strain 972 / ATCC 24843) (Fission yeast) protein is rRNA processing protein rcl1 (rcl1).